Reading from the N-terminus, the 172-residue chain is Endoribonuclease YbeY (172 aa).

Residues H137, H141, and H147 each coordinate Zn(2+).

This sequence belongs to the endoribonuclease YbeY family. Zn(2+) serves as cofactor.

The protein localises to the cytoplasm. In terms of biological role, single strand-specific metallo-endoribonuclease involved in late-stage 70S ribosome quality control and in maturation of the 3' terminus of the 16S rRNA. This is Endoribonuclease YbeY from Dehalococcoides mccartyi (strain ATCC BAA-2266 / KCTC 15142 / 195) (Dehalococcoides ethenogenes (strain 195)).